A 458-amino-acid chain; its full sequence is Enolase (458 aa).

(2R)-2-phosphoglycerate is bound at residue Gln177. The active-site Proton donor is Glu219. Asp256, Glu310, and Asp337 together coordinate Mg(2+). (2R)-2-phosphoglycerate-binding residues include Lys362, Arg391, Ser392, and Lys413. Lys362 serves as the catalytic Proton acceptor.

Belongs to the enolase family. It depends on Mg(2+) as a cofactor.

The protein resides in the cytoplasm. It localises to the secreted. It is found in the cell surface. The enzyme catalyses (2R)-2-phosphoglycerate = phosphoenolpyruvate + H2O. It functions in the pathway carbohydrate degradation; glycolysis; pyruvate from D-glyceraldehyde 3-phosphate: step 4/5. Its function is as follows. Catalyzes the reversible conversion of 2-phosphoglycerate (2-PG) into phosphoenolpyruvate (PEP). It is essential for the degradation of carbohydrates via glycolysis. The protein is Enolase of Mycoplasma genitalium (strain ATCC 33530 / DSM 19775 / NCTC 10195 / G37) (Mycoplasmoides genitalium).